A 363-amino-acid chain; its full sequence is DNA replication and repair protein RecF (363 aa).

30 to 37 (GINGSGKS) contributes to the ATP binding site.

This sequence belongs to the RecF family.

The protein resides in the cytoplasm. Its function is as follows. The RecF protein is involved in DNA metabolism; it is required for DNA replication and normal SOS inducibility. RecF binds preferentially to single-stranded, linear DNA. It also seems to bind ATP. In Pseudoalteromonas atlantica (strain T6c / ATCC BAA-1087), this protein is DNA replication and repair protein RecF.